Here is a 213-residue protein sequence, read N- to C-terminus: Transcriptional regulatory protein YdfI (213 aa).

In terms of domain architecture, Response regulatory spans 3-118; the sequence is KVLIVDDHLV…TLFHTMDAAI (116 aa). Asp54 is modified (4-aspartylphosphate). In terms of domain architecture, HTH luxR-type spans 142–207; sequence KQRNETQLTE…EAVTIAMQKG (66 aa). Positions 166–185 form a DNA-binding region, H-T-H motif; it reads SKAIAFDLGVSERTVKSRLT.

In terms of processing, phosphorylated by YdfH.

It localises to the cytoplasm. In terms of biological role, member of the two-component regulatory system YdfH/YdfI. Regulates the transcription of ydfJ by binding to its promoter region. This chain is Transcriptional regulatory protein YdfI (ydfI), found in Bacillus subtilis (strain 168).